We begin with the raw amino-acid sequence, 100 residues long: NADH-quinone oxidoreductase subunit K (100 aa).

The next 3 helical transmembrane spans lie at 4–24 (LQHG…CLVL), 28–48 (LLFM…AFVV), and 60–80 (IMYI…LALL).

This sequence belongs to the complex I subunit 4L family. NDH-1 is composed of 13 different subunits. Subunits NuoA, H, J, K, L, M, N constitute the membrane sector of the complex.

Its subcellular location is the cell inner membrane. It carries out the reaction a quinone + NADH + 5 H(+)(in) = a quinol + NAD(+) + 4 H(+)(out). NDH-1 shuttles electrons from NADH, via FMN and iron-sulfur (Fe-S) centers, to quinones in the respiratory chain. The immediate electron acceptor for the enzyme in this species is believed to be ubiquinone. Couples the redox reaction to proton translocation (for every two electrons transferred, four hydrogen ions are translocated across the cytoplasmic membrane), and thus conserves the redox energy in a proton gradient. This is NADH-quinone oxidoreductase subunit K from Proteus mirabilis (strain HI4320).